Here is a 275-residue protein sequence, read N- to C-terminus: 2-dehydro-3-deoxyphosphooctonate aldolase (275 aa).

It belongs to the KdsA family.

It localises to the cytoplasm. It catalyses the reaction D-arabinose 5-phosphate + phosphoenolpyruvate + H2O = 3-deoxy-alpha-D-manno-2-octulosonate-8-phosphate + phosphate. It functions in the pathway carbohydrate biosynthesis; 3-deoxy-D-manno-octulosonate biosynthesis; 3-deoxy-D-manno-octulosonate from D-ribulose 5-phosphate: step 2/3. Its pathway is bacterial outer membrane biogenesis; lipopolysaccharide biosynthesis. This Francisella tularensis subsp. mediasiatica (strain FSC147) protein is 2-dehydro-3-deoxyphosphooctonate aldolase.